The chain runs to 156 residues: Transcription antitermination protein NusB (156 aa).

The protein belongs to the NusB family.

Involved in transcription antitermination. Required for transcription of ribosomal RNA (rRNA) genes. Binds specifically to the boxA antiterminator sequence of the ribosomal RNA (rrn) operons. The sequence is that of Transcription antitermination protein NusB from Rickettsia conorii (strain ATCC VR-613 / Malish 7).